Consider the following 104-residue polypeptide: MSETMIHVEVVYALPQKQRLIGLDVPDGTSMLDAAKLSGIGEQFADLDLDKAPMGVFGKVVANPAGHILKPGERVEIYRPLTADPKLNRKRRAKEKASAGKASN.

The interval 80–104 is disordered; that stretch reads PLTADPKLNRKRRAKEKASAGKASN.

This sequence belongs to the UPF0125 (RnfH) family.

This chain is Protein RnfH, found in Alcanivorax borkumensis (strain ATCC 700651 / DSM 11573 / NCIMB 13689 / SK2).